The following is a 307-amino-acid chain: Type 2A encapsulin shell protein (307 aa).

It belongs to the encapsulin family. Family 2A subfamily. Homooligomeric. The encapsulin nanocompartment is formed by 60 subunits; monomers form pentamers which assemble to form shells. There are 12 charged pores where the pentamers meet as well as 3-fold axis channels and dimer channels. The N-terminus is blocked.

It localises to the encapsulin nanocompartment. The protein localises to the cytoplasm. Its subcellular location is the cytosol. It is found in the cell membrane. Shell component of a type 2A encapsulin nanocompartment. Forms encapsulin nanocompartments about 24 nm in diameter from 60 monomers. Probably encapsulates at least cysteine desulfurase (CyD, AC O32975) and allows passage of cysteine into its interior, probably involved in sulfur metabolism. Expression in M.smegmatis generates a multimeric protein, whereas expression in E.coli does not. This is Type 2A encapsulin shell protein from Mycobacterium leprae (strain TN).